Reading from the N-terminus, the 231-residue chain is DNA mismatch repair protein MutH (231 aa).

Belongs to the MutH family.

The protein resides in the cytoplasm. In terms of biological role, sequence-specific endonuclease that cleaves unmethylated GATC sequences. It is involved in DNA mismatch repair. This Salmonella typhi protein is DNA mismatch repair protein MutH.